A 446-amino-acid polypeptide reads, in one-letter code: RUN domain-containing protein 3A (446 aa).

The segment at 1–298 (METSFVQTTM…LQLQLEEAAA (298 aa)) is interaction with RAP2A. Residues 52-189 (DDSSEEFVNF…IDFSFCLKGE (138 aa)) form the RUN domain. Thr215 is subject to Phosphothreonine. The interval 216–239 (DEEERHSAESSTSEDNSPEHPYLP) is disordered. A Phosphoserine modification is found at Ser232. The stretch at 267–322 (YLEELVRLRESQLKDLEAENRRLQLQLEEAAAQNQREKRELEGVILELQEQLTGLI) forms a coiled coil. Residues 372–384 (PLSAEASLSSDSQ) show a composition bias toward polar residues. Positions 372–404 (PLSAEASLSSDSQRLGEGTRDEEPWGPIGKDPT) are disordered. 2 positions are modified to phosphoserine: Ser416 and Ser419.

The protein belongs to the RUNDC3 family. As to quaternary structure, interacts with the GTP-bound form of RAP2A.

Its function is as follows. May act as an effector of RAP2A in neuronal cells. This chain is RUN domain-containing protein 3A (RUNDC3A), found in Pongo abelii (Sumatran orangutan).